A 967-amino-acid chain; its full sequence is RNA polymerase II C-terminal domain phosphatase-like 1 (967 aa).

The Nuclear localization signal (NLS) signature appears at 38–41 (RKKK). An FCP1 homology domain is found at 151–401 (LNLRCLGIVF…TPVLCVARNV (251 aa)). Disordered stretches follow at residues 548–611 (SEPS…VQSR) and 643–712 (MEKH…RNSD). The span at 590–603 (PSEPSFPQRPPVQA) shows a compositional bias: pro residues. The segment covering 665-684 (RMLHENRRPPKESLRRDEQL) has biased composition (basic and acidic residues). DRBM domains lie at 724–792 (TETS…NLAD) and 855–925 (GSIT…SVRS). The segment at 928-967 (GQPLHKRQGSPRSFGGMSNKRLKPDFQRSLQRMPSSGRYS) is disordered. The required for nuclear localization (NLS) stretch occupies residues 945-967 (SNKRLKPDFQRSLQRMPSSGRYS). A Nuclear localization signal (NLS) motif is present at residues 947-951 (KRLKP). Positions 955-967 (RSLQRMPSSGRYS) are enriched in polar residues.

Interacts with FREE1, ANAC019, MYB3, MYB4 and MYB32. Binds to DMS3. Interacts with RCF3. Interacts with RS40 and RS41. Interacts with EIF4A3. Interacts with UPF3. The cofactor is Mg(2+). Co(2+) serves as cofactor. Requires Mn(2+) as cofactor. In terms of tissue distribution, expressed at very low levels in roots, leaves, stems, flowers and siliques.

It localises to the nucleus. The protein resides in the nucleus speckle. The enzyme catalyses O-phospho-L-seryl-[protein] + H2O = L-seryl-[protein] + phosphate. It carries out the reaction O-phospho-L-threonyl-[protein] + H2O = L-threonyl-[protein] + phosphate. Its function is as follows. Processively dephosphorylates 'Ser-5' but not 'Ser-2' of the heptad repeats YSPTSPS in the C-terminal domain of the largest RNA polymerase II subunit (RPB1). This promotes the activity of RNA polymerase II. Together with CPL2, required for male gametes fertility. Multifunctional regulator that modulates plant growth, stress, and phytohormones responses. Negative regulator of stress gene transcription involved in abscisic acid (ABA) mediated and jasmonic acid (JA) mediated signaling pathways, NaCl, osmotic stress, wounding, and cold resistance. Negatively regulates the expression of jasmonic acid (JA) biosynthetic genes in response to wounding. Forms a complex with RCF3 that modulates co-transcriptional processes such as mRNA capping and polyadenylation, and functions to repress stress-inducible gene expression. Dephosphorylates RCF3. Involved in the dephosphorylation of EIF4A3. This dephosphorylation retains EIF4A3 in the nucleus and limits its accumulation in the cytoplasm. Is essential for the degradation of the nonsense-mediated mRNA decay (NMD) transcripts. In Arabidopsis thaliana (Mouse-ear cress), this protein is RNA polymerase II C-terminal domain phosphatase-like 1.